The following is a 381-amino-acid chain: Alcohol dehydrogenase-like 6 (381 aa).

8 residues coordinate Zn(2+): C53, S55, H72, C102, C105, C108, C116, and C179. Positions 55 and 72 each coordinate an alcohol. S55 contributes to the NAD(+) binding site. Residues 204–209 (GLGTVG), D228, K233, 297–299 (LGV), F324, and R374 each bind NAD(+).

Belongs to the zinc-containing alcohol dehydrogenase family. Class-III subfamily. As to quaternary structure, homodimer. Zn(2+) serves as cofactor.

The protein resides in the cytoplasm. It catalyses the reaction a primary alcohol + NAD(+) = an aldehyde + NADH + H(+). The catalysed reaction is a secondary alcohol + NAD(+) = a ketone + NADH + H(+). The protein is Alcohol dehydrogenase-like 6 of Arabidopsis thaliana (Mouse-ear cress).